A 37-amino-acid polypeptide reads, in one-letter code: Esculentin-2JDa (37 aa).

Residues C31 and C37 are joined by a disulfide bond.

In terms of tissue distribution, expressed by the skin glands.

It localises to the secreted. Its function is as follows. Has antibacterial activity against E.coli and S.aureus strains. This is Esculentin-2JDa from Odorrana jingdongensis (Jingdong frog).